The primary structure comprises 533 residues: MTTFRELGLSDSLLQSVESMGFEEATPIQAETIPHALQGKDIIGQAQTGTGKTAAFGLPLLDKVDTHKESVQGIVIAPTRELAIQVGEELYKIGKHKRVRILPIYGGQDINRQIRALKKHPHIIVGTPGRILDHINRKTLRLQNVETVVLDEADEMLNMGFIEDIEAILTDVPETHQTLLFSATMPDPIRRIAERFMTEPQHIKVKAKEVTMPNIQQFYLEVQEKKKFDVLTRLLDIQSPELAIVFGRTKRRVDELSEALNLRGYAAEGIHGDLTQAKRMSVLRKFKEGSIEVLVATDVAARGLDISGVTHVYNFDIPQDPESYVHRIGRTGRAGKKGIAMLFVTPRESGQLKNIERTTKRKMDRMDAPTLDEALEGQQRLIAEKLQSTIENENLAYYKRIAEEMLEENDSVTVVAAALKMMTKEPDTTPIALTSEPPVVSRGGGSKKRGGNGGGYRDGNRNRSRDGRGGGDGRNRDRNRDGRNRDGNRDRNRDGNRDRNRDGGSRGRRGEGQGRPGSSNGRGERKHHSRPQA.

The Q motif motif lies at 2-30 (TTFRELGLSDSLLQSVESMGFEEATPIQA). Residues 33–203 (IPHALQGKDI…ERFMTEPQHI (171 aa)) form the Helicase ATP-binding domain. Residue 46–53 (AQTGTGKT) coordinates ATP. Positions 151-154 (DEAD) match the DEAD box motif. Positions 214–374 (NIQQFYLEVQ…RMDAPTLDEA (161 aa)) constitute a Helicase C-terminal domain. The disordered stretch occupies residues 428-533 (TTPIALTSEP…ERKHHSRPQA (106 aa)). Residues 458–512 (DGNRNRSRDGRGGGDGRNRDRNRDGRNRDGNRDRNRDGNRDRNRDGGSRGRRGEG) show a composition bias toward basic and acidic residues. Residues 524 to 533 (ERKHHSRPQA) are compositionally biased toward basic residues.

This sequence belongs to the DEAD box helicase family. CshA subfamily. Oligomerizes, may be a member of the RNA degradosome.

It localises to the cytoplasm. It carries out the reaction ATP + H2O = ADP + phosphate + H(+). In terms of biological role, DEAD-box RNA helicase possibly involved in RNA degradation. May work in conjunction with the cold shock proteins to ensure proper initiation of transcription at low and optimal temperatures. Unwinds dsRNA in both 5'- and 3'-directions and shows RNA-dependent ATPase activity. Probably has a somewhat redundant function with cshB, as cshA can partially complement the growth effects of a cshB deletion. Plays a role in adaptation to cold, oxididant and pH stress. This Bacillus cereus (strain ATCC 14579 / DSM 31 / CCUG 7414 / JCM 2152 / NBRC 15305 / NCIMB 9373 / NCTC 2599 / NRRL B-3711) protein is DEAD-box ATP-dependent RNA helicase CshA.